A 444-amino-acid polypeptide reads, in one-letter code: Tubulin beta-8 chain (444 aa).

Residues 1 to 4 (MREI) carry the MREI motif motif. Positions 11, 69, 138, 142, 143, and 144 each coordinate GTP. Glutamate 69 is a Mg(2+) binding site. Position 172 is a phosphoserine; by CDK1 (serine 172). GTP contacts are provided by asparagine 204 and asparagine 226. Residues 423 to 444 (QQYQDATAEEEEDEEYAEEEVA) are disordered. Acidic residues predominate over residues 429–444 (TAEEEEDEEYAEEEVA). Glutamate 436 is modified (5-glutamyl polyglutamate).

It belongs to the tubulin family. Dimer of alpha and beta chains. A typical microtubule is a hollow water-filled tube with an outer diameter of 25 nm and an inner diameter of 15 nM. Alpha-beta heterodimers associate head-to-tail to form protofilaments running lengthwise along the microtubule wall with the beta-tubulin subunit facing the microtubule plus end conferring a structural polarity. Microtubules usually have 13 protofilaments but different protofilament numbers can be found in some organisms and specialized cells. Mg(2+) serves as cofactor. Some glutamate residues at the C-terminus are polyglycylated, resulting in polyglycine chains on the gamma-carboxyl group. Glycylation is mainly limited to tubulin incorporated into axonemes (cilia and flagella) whereas glutamylation is prevalent in neuronal cells, centrioles, axonemes, and the mitotic spindle. Both modifications can coexist on the same protein on adjacent residues, and lowering polyglycylation levels increases polyglutamylation, and reciprocally. Cilia and flagella glycylation is required for their stability and maintenance. Flagella glycylation controls sperm motility. Post-translationally, some glutamate residues at the C-terminus are polyglutamylated, resulting in polyglutamate chains on the gamma-carboxyl group. Polyglutamylation plays a key role in microtubule severing by spastin (SPAST). SPAST preferentially recognizes and acts on microtubules decorated with short polyglutamate tails: severing activity by SPAST increases as the number of glutamates per tubulin rises from one to eight, but decreases beyond this glutamylation threshold. Glutamylation is also involved in cilia motility. In terms of processing, phosphorylated on Ser-172 by CDK1 during the cell cycle, from metaphase to telophase, but not in interphase. This phosphorylation inhibits tubulin incorporation into microtubules.

Its subcellular location is the cytoplasm. The protein localises to the cytoskeleton. It is found in the spindle. Functionally, tubulin is the major constituent of microtubules, a cylinder consisting of laterally associated linear protofilaments composed of alpha- and beta-tubulin heterodimers. Microtubules grow by the addition of GTP-tubulin dimers to the microtubule end, where a stabilizing cap forms. Below the cap, tubulin dimers are in GDP-bound state, owing to GTPase activity of alpha-tubulin. Has a key role in meiotic spindle assembly and oocyte maturation. This is Tubulin beta-8 chain (TUBB8) from Pan troglodytes (Chimpanzee).